Here is a 573-residue protein sequence, read N- to C-terminus: 60 kDa lysophospholipase (573 aa).

In terms of domain architecture, Asparaginase/glutaminase spans 9 to 355 (RRLLAVYTGG…DVRKELLTKD (347 aa)). The Acyl-ester intermediate role is filled by T19. The tract at residues 41–350 (TLPMFHDEEH…PGLSLDVRKE (310 aa)) is asparaginase. Substrate is bound by residues 84–86 (DSS) and 116–117 (TD). ANK repeat units lie at residues 141 to 170 (GAQV…YVIP), 399 to 429 (ALVP…DLGL), 433 to 462 (NGQT…DVNT), 466 to 495 (DGFS…SLST), and 533 to 562 (DGHS…AVGA).

It in the N-terminal section; belongs to the asparaginase 1 family. In terms of assembly, monomer.

The enzyme catalyses a 1-acyl-sn-glycero-3-phosphocholine + H2O = sn-glycerol 3-phosphocholine + a fatty acid + H(+). It carries out the reaction L-asparagine + H2O = L-aspartate + NH4(+). The catalysed reaction is a 1-O-alkyl-2-acetyl-sn-glycero-3-phosphocholine + H2O = a 1-O-alkyl-sn-glycero-3-phosphocholine + acetate + H(+). It catalyses the reaction 1-hexadecanoyl-sn-glycero-3-phosphocholine + H2O = sn-glycerol 3-phosphocholine + hexadecanoate + H(+). The enzyme catalyses 2 1-hexadecanoyl-sn-glycero-3-phosphocholine = 1,2-dihexadecanoyl-sn-glycero-3-phosphocholine + sn-glycerol 3-phosphocholine. It carries out the reaction 1-octadecanoyl-sn-glycero-3-phosphocholine + H2O = octadecanoate + sn-glycerol 3-phosphocholine + H(+). The catalysed reaction is 1-(9Z-octadecenoyl)-sn-glycero-3-phosphocholine + H2O = sn-glycerol 3-phosphocholine + (9Z)-octadecenoate + H(+). It catalyses the reaction 1-hexadecanoyl-sn-glycero-3-phosphoethanolamine + H2O = sn-glycero-3-phosphoethanolamine + hexadecanoate + H(+). The enzyme catalyses 1-(9Z-octadecenoyl)-sn-glycero-3-phosphoethanolamine + H2O = sn-glycero-3-phosphoethanolamine + (9Z)-octadecenoate + H(+). It carries out the reaction 1-hexadecanoyl-sn-glycero-3-phosphoethanolamine + 1-hexadecanoyl-sn-glycero-3-phosphocholine = 1,2-dihexadecanoyl-sn-glycero-3-phosphoethanolamine + sn-glycerol 3-phosphocholine. The catalysed reaction is 2-(5Z,8Z,11Z,14Z)-eicosatetraenoyl-sn-glycero-3-phosphocholine + H2O = sn-glycerol 3-phosphocholine + (5Z,8Z,11Z,14Z)-eicosatetraenoate + H(+). It catalyses the reaction 2-hexadecanoyl-sn-glycero-3-phosphocholine + H2O = sn-glycerol 3-phosphocholine + hexadecanoate + H(+). The enzyme catalyses 2 2-hexadecanoyl-sn-glycero-3-phosphocholine = 1,2-dihexadecanoyl-sn-glycero-3-phosphocholine + sn-glycerol 3-phosphocholine. It carries out the reaction 1-O-(9Z)-octadecenoyl-2-O-acetyl-sn-glycero-3-phosphocholine + H2O = 2-acetyl-sn-glycero-3-phosphocholine + (9Z)-octadecenoate + H(+). The catalysed reaction is a 1-acyl-sn-glycero-3-phospho-(1D-myo-inositol) + 1-hexadecanoyl-sn-glycero-3-phosphocholine = a 1-acyl-2-hexadecanoyl-sn-glycero-3-phospho-(1D-myo-inositol) + sn-glycerol 3-phosphocholine. It catalyses the reaction 2 2-(5Z,8Z,11Z,14Z)-eicosatetraenoyl-sn-glycero-3-phosphocholine = 1,2-di-(5Z,8Z,11Z,14Z-eicosatetraenoyl)-sn-glycero-3-phosphocholine + sn-glycerol 3-phosphocholine. Exhibits lysophospholipase, transacylase, PAF acetylhydrolase and asparaginase activities. Can catalyze three types of transacylation reactions: (1) acyl transfer from 1-acyl-sn-glycero-3-phosphocholine (1-acyl-GPC) to the sn-1(3) positions of glycerol and 2-acylglycerol (sn-1 to -1(3) transfer), (2) acyl transfer from 1-acyl-GPC to the sn-2 positions of 1-acyl-GPC, 1-acyl-sn-glycero-3-phosphoethanolamine (1-acyl-GPE), and other lysophospholipids (sn-1 to -2 transfer) and (3) acyl transfer from 2-acyl-GPC to the sn-1 position of 2-acyl-GPC and 2-acyl-GPE (sn-2 to -1 transfer). Mediates the synthesis of 1-arachidonoyl species of phospholipids by transferring the arachidonoyl residue from 2-arachidonoyl lysophospholipid to the sn-1 position of 2-acyl lysophospholipid. This chain is 60 kDa lysophospholipase (ASPG), found in Homo sapiens (Human).